The chain runs to 93 residues: Large ribosomal subunit protein eL43 (93 aa).

The C4-type zinc-finger motif lies at 39-60 (CEFCGKYGVKRKAVGIWGCKDC).

This sequence belongs to the eukaryotic ribosomal protein eL43 family.

The chain is Large ribosomal subunit protein eL43 (RPL37A) from Brassica rapa subsp. rapa (Turnip).